A 314-amino-acid chain; its full sequence is 4-hydroxy-3-methylbut-2-enyl diphosphate reductase (314 aa).

A [4Fe-4S] cluster-binding site is contributed by C12. Residues H41 and H74 each contribute to the (2E)-4-hydroxy-3-methylbut-2-enyl diphosphate site. Positions 41 and 74 each coordinate dimethylallyl diphosphate. Isopentenyl diphosphate contacts are provided by H41 and H74. C96 lines the [4Fe-4S] cluster pocket. H124 serves as a coordination point for (2E)-4-hydroxy-3-methylbut-2-enyl diphosphate. H124 contacts dimethylallyl diphosphate. H124 contributes to the isopentenyl diphosphate binding site. E126 acts as the Proton donor in catalysis. (2E)-4-hydroxy-3-methylbut-2-enyl diphosphate is bound at residue T167. C197 lines the [4Fe-4S] cluster pocket. Residues S225, S226, N227, and S269 each contribute to the (2E)-4-hydroxy-3-methylbut-2-enyl diphosphate site. Dimethylallyl diphosphate-binding residues include S225, S226, N227, and S269. 4 residues coordinate isopentenyl diphosphate: S225, S226, N227, and S269.

The protein belongs to the IspH family. It depends on [4Fe-4S] cluster as a cofactor.

The enzyme catalyses isopentenyl diphosphate + 2 oxidized [2Fe-2S]-[ferredoxin] + H2O = (2E)-4-hydroxy-3-methylbut-2-enyl diphosphate + 2 reduced [2Fe-2S]-[ferredoxin] + 2 H(+). The catalysed reaction is dimethylallyl diphosphate + 2 oxidized [2Fe-2S]-[ferredoxin] + H2O = (2E)-4-hydroxy-3-methylbut-2-enyl diphosphate + 2 reduced [2Fe-2S]-[ferredoxin] + 2 H(+). The protein operates within isoprenoid biosynthesis; dimethylallyl diphosphate biosynthesis; dimethylallyl diphosphate from (2E)-4-hydroxy-3-methylbutenyl diphosphate: step 1/1. It functions in the pathway isoprenoid biosynthesis; isopentenyl diphosphate biosynthesis via DXP pathway; isopentenyl diphosphate from 1-deoxy-D-xylulose 5-phosphate: step 6/6. Functionally, catalyzes the conversion of 1-hydroxy-2-methyl-2-(E)-butenyl 4-diphosphate (HMBPP) into a mixture of isopentenyl diphosphate (IPP) and dimethylallyl diphosphate (DMAPP). Acts in the terminal step of the DOXP/MEP pathway for isoprenoid precursor biosynthesis. This Aliivibrio fischeri (strain MJ11) (Vibrio fischeri) protein is 4-hydroxy-3-methylbut-2-enyl diphosphate reductase.